The sequence spans 440 residues: Coenzyme A disulfide reductase (440 aa).

FAD is bound at residue 8–33 (GAVAGGATCASQIRRLDKDSEITIFE). Residues T15, Q19, R22, S39, and N42 each contribute to the substrate site. Catalysis depends on C43, which acts as the Nucleophile. C43 functions as the Redox-active in the catalytic mechanism. K71 contacts substrate. 151–166 (ALVVGAGYISLEVLEN) contributes to the NADP(+) binding site. 267–277 (TNIPNIYALGD) serves as a coordination point for FAD. H299 lines the substrate pocket. Y419 provides a ligand contact to FAD. K427 is a substrate binding site.

This sequence belongs to the class-III pyridine nucleotide-disulfide oxidoreductase family. As to quaternary structure, homodimer. FAD serves as cofactor.

The catalysed reaction is NADP(+) + 2 CoA = CoA-disulfide + NADPH + H(+). Functionally, catalyzes specifically the NADPH-dependent reduction of coenzyme A disulfide. The chain is Coenzyme A disulfide reductase from Staphylococcus haemolyticus (strain JCSC1435).